Reading from the N-terminus, the 197-residue chain is Small ribosomal subunit protein uS4B (197 aa).

Residues 88 to 153 form the S4 RNA-binding domain; the sequence is CRLDNMVYRM…IEKYLSNLKN (66 aa).

It belongs to the universal ribosomal protein uS4 family. In terms of assembly, part of the 30S ribosomal subunit. Contacts protein S5. The interaction surface between S4 and S5 is involved in control of translational fidelity.

One of the primary rRNA binding proteins, it binds directly to 16S rRNA where it nucleates assembly of the body of the 30S subunit. Functionally, with S5 and S12 plays an important role in translational accuracy. The chain is Small ribosomal subunit protein uS4B from Alkaliphilus oremlandii (strain OhILAs) (Clostridium oremlandii (strain OhILAs)).